A 699-amino-acid chain; its full sequence is Elongation factor G (699 aa).

One can recognise a tr-type G domain in the interval 8-288 (EDYRNFGIMA…AVCEYLPSPL (281 aa)). Residues 17-24 (AHIDAGKT), 86-90 (DTPGH), and 140-143 (NKMD) each bind GTP.

It belongs to the TRAFAC class translation factor GTPase superfamily. Classic translation factor GTPase family. EF-G/EF-2 subfamily.

Its subcellular location is the cytoplasm. Functionally, catalyzes the GTP-dependent ribosomal translocation step during translation elongation. During this step, the ribosome changes from the pre-translocational (PRE) to the post-translocational (POST) state as the newly formed A-site-bound peptidyl-tRNA and P-site-bound deacylated tRNA move to the P and E sites, respectively. Catalyzes the coordinated movement of the two tRNA molecules, the mRNA and conformational changes in the ribosome. The polypeptide is Elongation factor G (Allorhizobium ampelinum (strain ATCC BAA-846 / DSM 112012 / S4) (Agrobacterium vitis (strain S4))).